Here is a 166-residue protein sequence, read N- to C-terminus: Phosphopantetheine adenylyltransferase (166 aa).

Position 10 (serine 10) interacts with substrate. ATP contacts are provided by residues 10–11 (SF) and histidine 18. Substrate-binding residues include lysine 42, alanine 79, and arginine 93. Residues 94 to 96 (GLR), glutamate 104, and 129 to 135 (VRPITAT) each bind ATP.

Belongs to the bacterial CoaD family. As to quaternary structure, homohexamer. Requires Mg(2+) as cofactor.

The protein resides in the cytoplasm. It carries out the reaction (R)-4'-phosphopantetheine + ATP + H(+) = 3'-dephospho-CoA + diphosphate. It functions in the pathway cofactor biosynthesis; coenzyme A biosynthesis; CoA from (R)-pantothenate: step 4/5. Functionally, reversibly transfers an adenylyl group from ATP to 4'-phosphopantetheine, yielding dephospho-CoA (dPCoA) and pyrophosphate. The sequence is that of Phosphopantetheine adenylyltransferase from Methylobacterium nodulans (strain LMG 21967 / CNCM I-2342 / ORS 2060).